Consider the following 295-residue polypeptide: Golgi-associated RAB2 interactor protein 1A (295 aa).

The tract at residues 187–206 is disordered; sequence MPNSSTETTPESSRPASSQS. The segment covering 190–206 has biased composition (low complexity); sequence SSTETTPESSRPASSQS. Phosphoserine occurs at positions 220, 221, 251, and 255.

It belongs to the GARIN family. As to quaternary structure, interacts (via N-terminus) with RAB2B (in GTP-bound form).

Its subcellular location is the golgi apparatus. In terms of biological role, RAB2B effector protein required for accurate acrosome formation and normal male fertility. This chain is Golgi-associated RAB2 interactor protein 1A (Garin1a), found in Rattus norvegicus (Rat).